Here is a 254-residue protein sequence, read N- to C-terminus: Very-long-chain (3R)-3-hydroxyacyl-CoA dehydratase 2 (254 aa).

The span at 1-10 shows a compositional bias: low complexity; the sequence is MAAAAATAAT. The interval 1–34 is disordered; it reads MAAAAATAATKGNGGGSGRVGAGDSSGARKKKGP. Ala2 is subject to N-acetylalanine. At 2–41 the chain is on the cytoplasmic side; it reads AAAAATAATKGNGGGSGRVGAGDSSGARKKKGPGPVATAY. Residues 12–21 are compositionally biased toward gly residues; sequence GNGGGSGRVG. A helical membrane pass occupies residues 42–60; sequence LVIYNVVMTAGWLVIAVGL. Residues 61–79 lie on the Lumenal side of the membrane; it reads VRAYLAKGSYHSLYYSIER. A helical membrane pass occupies residues 80 to 97; sequence PLKFFQTGALLEILHCAI. Over 98 to 107 the chain is Cytoplasmic; it reads GIVPSSVVLT. A helical transmembrane segment spans residues 108-125; sequence SFQVMSRVFLIWAVTHSV. Residues 126-130 lie on the Lumenal side of the membrane; it reads KEVQS. A helical membrane pass occupies residues 131-146; the sequence is EDSVLLFVIAWTITEI. Residues 147–169 lie on the Cytoplasmic side of the membrane; it reads IRYSFYTFSLLNHLPYIIKWARY. Residues 170–187 form a helical membrane-spanning segment; sequence TLFIVLYPMGVTGELLTI. Catalysis depends on residues Tyr176 and Glu183. Residues 188–217 are Lumenal-facing; sequence YAALPFVRQAGLYSISLPNKYNFSFDYHAF. Residues 198 to 214 are may be involved in interaction with TECR; the sequence is GLYSISLPNKYNFSFDY. A glycan (N-linked (GlcNAc...) asparagine) is linked at Asn209. The chain crosses the membrane as a helical span at residues 218-235; sequence LILIMISYIPLFPQLYFH. Residues 236-254 are Cytoplasmic-facing; the sequence is MIHQRRKVLSHTEEHKKFE.

Belongs to the very long-chain fatty acids dehydratase HACD family. As to quaternary structure, may interact with enzymes of the ELO family (including ELOVL1); with those enzymes that mediate condensation, the first of the four steps of the reaction cycle responsible for fatty acids elongation, may be part of a larger fatty acids elongase complex. Interacts with BCAP31. Interacts with TECR.

The protein resides in the endoplasmic reticulum membrane. The catalysed reaction is a very-long-chain (3R)-3-hydroxyacyl-CoA = a very-long-chain (2E)-enoyl-CoA + H2O. It carries out the reaction (3R)-hydroxyhexadecanoyl-CoA = (2E)-hexadecenoyl-CoA + H2O. The enzyme catalyses (3R)-hydroxyoctadecanoyl-CoA = (2E)-octadecenoyl-CoA + H2O. It catalyses the reaction (3R)-hydroxyeicosanoyl-CoA = (2E)-eicosenoyl-CoA + H2O. The catalysed reaction is (3R)-hydroxydocosanoyl-CoA = (2E)-docosenoyl-CoA + H2O. It carries out the reaction (3R)-hydroxytetracosanoyl-CoA = (2E)-tetracosenoyl-CoA + H2O. The enzyme catalyses (3R)-hydroxyhexacosanoyl-CoA = (2E)-hexacosenoyl-CoA + H2O. The protein operates within lipid metabolism; fatty acid biosynthesis. Catalyzes the third of the very long-chain fatty acids (VLCFA) elongation four-step cycle (condensation, reduction, dehydration, and reduction). This endoplasmic reticulum-elongation process is characterized by the addition of two carbons to the lipid chain through each cycle. This enzyme catalyzes the dehydration of the 3-hydroxyacyl-CoA intermediate into trans-2,3-enoyl-CoA, within each cycle of elongation. Therefore, it participates in the production of various VLCFAs involved in multiple biological processes as precursors of membrane lipids and lipid mediators. In Mus musculus (Mouse), this protein is Very-long-chain (3R)-3-hydroxyacyl-CoA dehydratase 2.